The chain runs to 220 residues: Fructose-6-phosphate aldolase (220 aa).

Lys85 functions as the Schiff-base intermediate with substrate in the catalytic mechanism.

It belongs to the transaldolase family. Type 3A subfamily. Homodecamer.

The protein localises to the cytoplasm. The catalysed reaction is beta-D-fructose 6-phosphate = dihydroxyacetone + D-glyceraldehyde 3-phosphate. Its function is as follows. Catalyzes the reversible formation of fructose 6-phosphate from dihydroxyacetone and D-glyceraldehyde 3-phosphate via an aldolization reaction. The chain is Fructose-6-phosphate aldolase from Salmonella gallinarum (strain 287/91 / NCTC 13346).